Reading from the N-terminus, the 159-residue chain is MNAQKGFTLIELMIVIAIIGILAAIALPAYQDYISKSQTTRVSGELAAGKTAVDAALFEGKTPVLSEESSTSKENIGLTSSETSTKPRSNLMASVELTGFADNGAGTISATLGNKANKDIAKTVITQERTTDGVWTCKIDGSQAAKYKEKFNPTGCVKK.

Positions 1–6 (MNAQKG) are cleaved as a propeptide — leader sequence. The residue at position 7 (Phe-7) is an N-methylphenylalanine. Residues 7–27 (FTLIELMIVIAIIGILAAIAL) form a helical membrane-spanning segment. A disordered region spans residues 64–87 (VLSEESSTSKENIGLTSSETSTKP). A compositionally biased stretch (polar residues) spans 67-87 (EESSTSKENIGLTSSETSTKP). An intrachain disulfide couples Cys-137 to Cys-156.

It belongs to the N-Me-Phe pilin family. Major component of the type IV pilus (T4P) that plays a role in surface and attachment to the host epithelial tissues.

The protein localises to the fimbrium. The protein resides in the membrane. This chain is Type IV major alpha-pilin (tfpI), found in Moraxella bovis.